Reading from the N-terminus, the 117-residue chain is Inner kinetochore subunit MHF1 (117 aa).

Belongs to the TAF9 family. CENP-S/MHF1 subfamily. As to quaternary structure, the MHF histone-fold complex is a heterotetramer of 2 MHF1-MHF2 heterodimers. Together with MPH1/FANCM, forms the FANCM-MHF complex. Component of the inner kinetochore constitutive centromere-associated network (CCAN).

DsDNA-binding component of a FANCM-MHF complex involved in DNA damage repair and genome maintenance. FANCM-MHF promotes gene conversion at blocked replication forks, probably by reversal of the stalled fork. Component of the kinetochore, a multiprotein complex that assembles on centromeric DNA and attaches chromosomes to spindle microtubules, mediating chromosome segregation and sister chromatid segregation during meiosis and mitosis. Component of the inner kinetochore constitutive centromere-associated network (CCAN), which serves as a structural platform for outer kinetochore assembly. The protein is Inner kinetochore subunit MHF1 of Candida albicans (strain SC5314 / ATCC MYA-2876) (Yeast).